Consider the following 72-residue polypeptide: DNA-directed RNA polymerase subunit omega (72 aa).

Belongs to the RNA polymerase subunit omega family. As to quaternary structure, the RNAP catalytic core consists of 2 alpha, 1 beta, 1 beta' and 1 omega subunit. When a sigma factor is associated with the core the holoenzyme is formed, which can initiate transcription.

It carries out the reaction RNA(n) + a ribonucleoside 5'-triphosphate = RNA(n+1) + diphosphate. Promotes RNA polymerase assembly. Latches the N- and C-terminal regions of the beta' subunit thereby facilitating its interaction with the beta and alpha subunits. This Francisella philomiragia subsp. philomiragia (strain ATCC 25017 / CCUG 19701 / FSC 153 / O#319-036) protein is DNA-directed RNA polymerase subunit omega.